The primary structure comprises 326 residues: Tagatose 1,6-diphosphate aldolase (326 aa).

Belongs to the aldolase LacD family.

It carries out the reaction D-tagatofuranose 1,6-bisphosphate = D-glyceraldehyde 3-phosphate + dihydroxyacetone phosphate. It participates in carbohydrate metabolism; D-tagatose 6-phosphate degradation; D-glyceraldehyde 3-phosphate and glycerone phosphate from D-tagatose 6-phosphate: step 2/2. This is Tagatose 1,6-diphosphate aldolase from Staphylococcus aureus (strain MW2).